The chain runs to 320 residues: Myoblast determination protein 1 (320 aa).

A Peptide (Met-Gly) (interchain with G-Cter in ubiquitin) cross-link involves residue Met1. Lys104 carries the N6-methyllysine; by EHMT2 modification. The bHLH domain maps to 109–160 (DRRKAATMRERRRLSKVNEAFETLKRCTSSNPNQRLPKVEILRNAIRYIEGL). Disordered stretches follow at residues 174–219 (AAAA…PPSG) and 262–320 (ESPA…YQVL). Polar residues-rich tracts occupy residues 197–207 (SDASSPRSNCS) and 291–301 (GESSGDPTQSP).

In terms of assembly, efficient DNA binding requires dimerization with another bHLH protein. Seems to form active heterodimers with ITF-2. Interacts with SUV39H1. Interacts with DDX5. Interacts with CHD2. Interacts with TSC22D3. Interacts with SETD3. Interacts with P-TEFB complex; promotes the transcriptional activity of MYOD1 through its CDK9-mediated phosphorylation. Interacts with CSRP3. Interacts with NUPR1. In terms of processing, phosphorylated by CDK9. This phosphorylation promotes its function in muscle differentiation. Acetylated by a complex containing EP300 and PCAF. The acetylation is essential to activate target genes. Conversely, its deacetylation by SIRT1 inhibits its function. Post-translationally, ubiquitinated on the N-terminus; which is required for proteasomal degradation. In terms of processing, methylation at Lys-104 by EHMT2/G9a inhibits myogenic activity.

It localises to the nucleus. Acts as a transcriptional activator that promotes transcription of muscle-specific target genes and plays a role in muscle differentiation. Together with MYF5 and MYOG, co-occupies muscle-specific gene promoter core region during myogenesis. Induces fibroblasts to differentiate into myoblasts. Interacts with and is inhibited by the twist protein. This interaction probably involves the basic domains of both proteins. The sequence is that of Myoblast determination protein 1 (MYOD1) from Homo sapiens (Human).